Consider the following 686-residue polypeptide: Glycine--tRNA ligase beta subunit (686 aa).

A disordered region spans residues 65–99; that stretch reads ALSEEKRGPSVERAKDENGEWSKAAQGFARGQGAT. Basic and acidic residues predominate over residues 67–84; sequence SEEKRGPSVERAKDENGE.

This sequence belongs to the class-II aminoacyl-tRNA synthetase family. As to quaternary structure, tetramer of two alpha and two beta subunits.

It is found in the cytoplasm. It catalyses the reaction tRNA(Gly) + glycine + ATP = glycyl-tRNA(Gly) + AMP + diphosphate. This is Glycine--tRNA ligase beta subunit from Leuconostoc citreum (strain KM20).